We begin with the raw amino-acid sequence, 30 residues long: Superoxide dismutase [Cu-Zn] 1 (30 aa).

This sequence belongs to the Cu-Zn superoxide dismutase family. Cu cation is required as a cofactor. Zn(2+) serves as cofactor. Expressed in fruits, leaves and pollen grains.

The protein localises to the cytoplasm. It localises to the endoplasmic reticulum. It carries out the reaction 2 superoxide + 2 H(+) = H2O2 + O2. With respect to regulation, inhibited by KCN and H(2)O(2). In terms of biological role, destroys radicals which are normally produced within the cells and which are toxic to biological systems. Probably involved in the protection against oxidative stress during pollen development. The sequence is that of Superoxide dismutase [Cu-Zn] 1 from Olea europaea (Common olive).